A 653-amino-acid polypeptide reads, in one-letter code: 4-alpha-glucanotransferase (653 aa).

E123 (nucleophile) is an active-site residue. The active-site Proton donor is D214.

This sequence belongs to the glycosyl hydrolase 57 family.

The catalysed reaction is Transfers a segment of a (1-&gt;4)-alpha-D-glucan to a new position in an acceptor, which may be glucose or a (1-&gt;4)-alpha-D-glucan.. This is 4-alpha-glucanotransferase from Thermococcus kodakarensis (strain ATCC BAA-918 / JCM 12380 / KOD1) (Pyrococcus kodakaraensis (strain KOD1)).